The chain runs to 286 residues: Aspartate-semialdehyde dehydrogenase (286 aa).

Residues 10–13 (RGMV), 37–38 (TS), and Gln74 contribute to the NADP(+) site. Arg103 contacts phosphate. Cys136 (acyl-thioester intermediate) is an active-site residue. Gln163 contacts substrate. Residues 166-167 (SG) and Pro194 each bind NADP(+). Residue Glu242 coordinates substrate. Phosphate is bound at residue Lys245. Arg269 provides a ligand contact to substrate. His276 (proton acceptor) is an active-site residue.

Belongs to the aspartate-semialdehyde dehydrogenase family. In terms of assembly, homodimer.

It catalyses the reaction L-aspartate 4-semialdehyde + phosphate + NADP(+) = 4-phospho-L-aspartate + NADPH + H(+). The protein operates within amino-acid biosynthesis; L-lysine biosynthesis via DAP pathway; (S)-tetrahydrodipicolinate from L-aspartate: step 2/4. Its pathway is amino-acid biosynthesis; L-methionine biosynthesis via de novo pathway; L-homoserine from L-aspartate: step 2/3. It functions in the pathway amino-acid biosynthesis; L-threonine biosynthesis; L-threonine from L-aspartate: step 2/5. Catalyzes the NADPH-dependent formation of L-aspartate-semialdehyde (L-ASA) by the reductive dephosphorylation of L-aspartyl-4-phosphate. The protein is Aspartate-semialdehyde dehydrogenase (asd) of Actinobacillus pleuropneumoniae (Haemophilus pleuropneumoniae).